A 335-amino-acid polypeptide reads, in one-letter code: UDP-N-acetylglucosamine--N-acetylmuramyl-(pentapeptide) pyrophosphoryl-undecaprenol N-acetylglucosamine transferase (335 aa).

UDP-N-acetyl-alpha-D-glucosamine is bound by residues 9 to 11 (TGG), N123, S176, and Q274.

The protein belongs to the glycosyltransferase 28 family. MurG subfamily.

It localises to the cell inner membrane. It carries out the reaction di-trans,octa-cis-undecaprenyl diphospho-N-acetyl-alpha-D-muramoyl-L-alanyl-D-glutamyl-meso-2,6-diaminopimeloyl-D-alanyl-D-alanine + UDP-N-acetyl-alpha-D-glucosamine = di-trans,octa-cis-undecaprenyl diphospho-[N-acetyl-alpha-D-glucosaminyl-(1-&gt;4)]-N-acetyl-alpha-D-muramoyl-L-alanyl-D-glutamyl-meso-2,6-diaminopimeloyl-D-alanyl-D-alanine + UDP + H(+). The protein operates within cell wall biogenesis; peptidoglycan biosynthesis. Its function is as follows. Cell wall formation. Catalyzes the transfer of a GlcNAc subunit on undecaprenyl-pyrophosphoryl-MurNAc-pentapeptide (lipid intermediate I) to form undecaprenyl-pyrophosphoryl-MurNAc-(pentapeptide)GlcNAc (lipid intermediate II). This chain is UDP-N-acetylglucosamine--N-acetylmuramyl-(pentapeptide) pyrophosphoryl-undecaprenol N-acetylglucosamine transferase, found in Campylobacter fetus subsp. fetus (strain 82-40).